The chain runs to 382 residues: Lipid-A-disaccharide synthase (382 aa).

This sequence belongs to the LpxB family.

The enzyme catalyses 2-N,3-O-bis[(3R)-3-hydroxytetradecanoyl]-alpha-D-glucosaminyl 1-phosphate + UDP-2-N,3-O-bis[(3R)-3-hydroxytetradecanoyl]-alpha-D-glucosamine = lipid A disaccharide (E. coli) + UDP + H(+). The catalysed reaction is a lipid X + a UDP-2-N,3-O-bis[(3R)-3-hydroxyacyl]-alpha-D-glucosamine = a lipid A disaccharide + UDP + H(+). It functions in the pathway glycolipid biosynthesis; lipid IV(A) biosynthesis; lipid IV(A) from (3R)-3-hydroxytetradecanoyl-[acyl-carrier-protein] and UDP-N-acetyl-alpha-D-glucosamine: step 5/6. Functionally, condensation of UDP-2,3-diacylglucosamine and 2,3-diacylglucosamine-1-phosphate to form lipid A disaccharide, a precursor of lipid A, a phosphorylated glycolipid that anchors the lipopolysaccharide to the outer membrane of the cell. This is Lipid-A-disaccharide synthase from Escherichia coli O127:H6 (strain E2348/69 / EPEC).